The following is an 858-amino-acid chain: GDP-fucose protein O-fucosyltransferase 2 (858 aa).

The Cytoplasmic segment spans residues 1-150 (MHCQLGGQAR…RPPCLLNHRR (150 aa)). A helical; Signal-anchor for type II membrane protein transmembrane segment spans residues 151-171 (LLLGLVSVLTVFLSCLPFTNA). Residues 172-858 (TVSPAALQDV…WPSLDPSSTL (687 aa)) are Lumenal-facing. A GDP-beta-L-fucose-binding site is contributed by 237–241 (GEGFH). E238 serves as the catalytic Proton acceptor. A disordered region spans residues 448-510 (AALTPQERQR…SRSRKEIQEE (63 aa)). A compositionally biased stretch (basic and acidic residues) spans 486–510 (DGEREKRKPGRRSDTSRSRKEIQEE). GDP-beta-L-fucose contacts are provided by residues 646–648 (HLR) and 787–788 (RF). Residues 819–858 (TGGQAQGKCFATKSHDPPEGRSRSELRRKYWPSLDPSSTL) form a disordered region. Over residues 831 to 846 (KSHDPPEGRSRSELRR) the composition is skewed to basic and acidic residues.

It belongs to the glycosyltransferase 68 family.

It localises to the endoplasmic reticulum membrane. It carries out the reaction L-seryl-[protein] + GDP-beta-L-fucose = 3-O-(alpha-L-fucosyl)-L-seryl-[protein] + GDP + H(+). The enzyme catalyses L-threonyl-[protein] + GDP-beta-L-fucose = 3-O-(alpha-L-fucosyl)-L-threonyl-[protein] + GDP + H(+). It participates in protein modification; protein glycosylation. Functionally, catalyzes the reaction that attaches fucose through an O-glycosidic linkage to a conserved serine or threonine residue in the consensus sequence C1-X-X-S/T-C2 of thrombospondin type I repeats (TSRs) where C1 and C2 are the first and second cysteines of the repeat, respectively. O-fucosylates microneme protein MIC2 and may play a role in its stabilization. Probably by regulating protein O-fucosylation, may play a role in tachyzoite adhesion to and/or invasion of host cells; however, POFUT2 involvement in adhesion/invasion is controversial. This is GDP-fucose protein O-fucosyltransferase 2 from Toxoplasma gondii (strain ATCC 50853 / GT1).